The primary structure comprises 140 residues: Hemoglobin subunit beta (140 aa).

Residues 1 to 140 (GSDLVSGFWG…VGDALAKAYH (140 aa)) enclose the Globin domain. Heme b is bound by residues H57 and H86.

It belongs to the globin family. In terms of assembly, heterotetramer of two alpha chains and two beta chains. As to expression, red blood cells.

Functionally, involved in oxygen transport from the lung to the various peripheral tissues. The polypeptide is Hemoglobin subunit beta (HBB) (Pelophylax lessonae (Pool frog)).